The primary structure comprises 380 residues: ATPase ASNA1 homolog (380 aa).

Position 48-55 (48-55) interacts with ATP; that stretch reads KGGVGKTT. The active site involves aspartate 77. ATP-binding residues include glutamate 248 and asparagine 275.

The protein belongs to the arsA ATPase family. As to quaternary structure, homodimer.

It localises to the cytoplasm. The protein resides in the endoplasmic reticulum. ATPase required for the post-translational delivery of tail-anchored (TA) proteins to the endoplasmic reticulum. Recognizes and selectively binds the transmembrane domain of TA proteins in the cytosol. This complex then targets to the endoplasmic reticulum by membrane-bound receptors, where the tail-anchored protein is released for insertion. This process is regulated by ATP binding and hydrolysis. ATP binding drives the homodimer towards the closed dimer state, facilitating recognition of newly synthesized TA membrane proteins. ATP hydrolysis is required for insertion. Subsequently, the homodimer reverts towards the open dimer state, lowering its affinity for the membrane-bound receptor, and returning it to the cytosol to initiate a new round of targeting. This Plasmodium yoelii yoelii protein is ATPase ASNA1 homolog.